Here is a 177-residue protein sequence, read N- to C-terminus: Coatomer subunit zeta-3 (177 aa).

This sequence belongs to the adaptor complexes small subunit family. Oligomeric complex that consists of at least the alpha, beta, beta', gamma, delta, epsilon and zeta subunits.

It is found in the cytoplasm. The protein resides in the golgi apparatus membrane. Its subcellular location is the cytoplasmic vesicle. It localises to the COPI-coated vesicle membrane. Functionally, the coatomer is a cytosolic protein complex that binds to dilysine motifs and reversibly associates with Golgi non-clathrin-coated vesicles, which further mediate biosynthetic protein transport from the ER, via the Golgi up to the trans Golgi network. Coatomer complex is required for budding from Golgi membranes, and is essential for the retrograde Golgi-to-ER transport of dilysine-tagged proteins. The zeta subunit may be involved in regulating the coat assembly and, hence, the rate of biosynthetic protein transport due to its association-dissociation properties with the coatomer complex. The chain is Coatomer subunit zeta-3 from Oryza sativa subsp. japonica (Rice).